A 288-amino-acid chain; its full sequence is UDP-3-O-acyl-N-acetylglucosamine deacetylase (288 aa).

Zn(2+)-binding residues include H79, H236, and D240. H263 acts as the Proton donor in catalysis.

This sequence belongs to the LpxC family. Requires Zn(2+) as cofactor.

The enzyme catalyses a UDP-3-O-[(3R)-3-hydroxyacyl]-N-acetyl-alpha-D-glucosamine + H2O = a UDP-3-O-[(3R)-3-hydroxyacyl]-alpha-D-glucosamine + acetate. It functions in the pathway glycolipid biosynthesis; lipid IV(A) biosynthesis; lipid IV(A) from (3R)-3-hydroxytetradecanoyl-[acyl-carrier-protein] and UDP-N-acetyl-alpha-D-glucosamine: step 2/6. In terms of biological role, catalyzes the hydrolysis of UDP-3-O-myristoyl-N-acetylglucosamine to form UDP-3-O-myristoylglucosamine and acetate, the committed step in lipid A biosynthesis. This Rickettsia conorii (strain ATCC VR-613 / Malish 7) protein is UDP-3-O-acyl-N-acetylglucosamine deacetylase.